The primary structure comprises 1588 residues: RB1-inducible coiled-coil protein 1 (1588 aa).

Phosphoserine is present on residues serine 222, serine 229, and serine 237. Position 238 is a phosphothreonine (threonine 238). Residues serine 243, serine 253, serine 257, and serine 261 each carry the phosphoserine modification. Positions 565–568 (KPRK) match the Nuclear localization signal motif. Residues serine 623, serine 646, serine 649, serine 652, serine 733, serine 1087, serine 1366, and serine 1478 each carry the phosphoserine modification. Residues 638–674 (QKVSTSQASPQSAASPRIESTTGITTTTSPKTPPPLT) are disordered. Over residues 643–667 (SQASPQSAASPRIESTTGITTTTSP) the composition is skewed to low complexity. Residues 730–736 (DFMSAVN) carry the FFAT motif. 2 coiled-coil regions span residues 858–1393 (LKEK…TSSF) and 1440–1479 (SVQE…SQSL).

As to quaternary structure, part of a complex containing ATG13/KIAA0652, ULK1 and RB1CC1. This complex associates with ATG101. Interacts with PTK2/FAK1 and PTK2B/PYK2. Interacts with GABARAP and GABARAPL1. Interacts with ATG16L1; the interaction is required for ULK1 complex-dependent autophagy. Interacts with RNF111, SKI and SMAD7. Interacts with COP1 in the cytoplasm of proliferating cells in response to UV stimulation. Interacts with TP53. Interacts with C9orf72. Interacts with WDR45B. Interacts with ATG13; this interaction is increased in the absence of TMEM39A. Interacts with WIPI2. Interacts with TAX1BP1. Interacts (via phosphorylated FFAT motif) with MOSPD2. Phosphorylation at Ser-733 of the FFAT motif activates interaction with MOSPD2. Expressed abundantly in heart and testis, and moderately in kidney, liver and skeletal muscles. Very low expression levels in lung and spleen. Colocalizes with RB1 in various tissues.

It is found in the nucleus. The protein localises to the cytoplasm. Its subcellular location is the cytosol. It localises to the preautophagosomal structure. The protein resides in the lysosome. Its function is as follows. Involved in autophagy. Regulates early events but also late events of autophagosome formation through direct interaction with Atg16L1. Required for the formation of the autophagosome-like double-membrane structure that surrounds the Salmonella-containing vacuole (SCV) during S.typhimurium infection and subsequent xenophagy. Involved in repair of DNA damage caused by ionizing radiation, which subsequently improves cell survival by decreasing apoptosis. Inhibits PTK2/FAK1 and PTK2B/PYK2 kinase activity, affecting their downstream signaling pathways. Plays a role as a modulator of TGF-beta-signaling by restricting substrate specificity of RNF111. Functions as a DNA-binding transcription factor. Is a potent regulator of the RB1 pathway through induction of RB1 expression. Plays a crucial role in muscular differentiation. Plays an indispensable role in fetal hematopoiesis and in the regulation of neuronal homeostasis. The sequence is that of RB1-inducible coiled-coil protein 1 from Mus musculus (Mouse).